The sequence spans 397 residues: Arginine biosynthesis bifunctional protein ArgJ (397 aa).

6 residues coordinate substrate: Thr147, Lys173, Thr184, Glu270, Asn392, and Thr397. The active-site Nucleophile is Thr184.

This sequence belongs to the ArgJ family. As to quaternary structure, heterotetramer of two alpha and two beta chains.

Its subcellular location is the cytoplasm. It catalyses the reaction N(2)-acetyl-L-ornithine + L-glutamate = N-acetyl-L-glutamate + L-ornithine. It carries out the reaction L-glutamate + acetyl-CoA = N-acetyl-L-glutamate + CoA + H(+). It participates in amino-acid biosynthesis; L-arginine biosynthesis; L-ornithine and N-acetyl-L-glutamate from L-glutamate and N(2)-acetyl-L-ornithine (cyclic): step 1/1. Its pathway is amino-acid biosynthesis; L-arginine biosynthesis; N(2)-acetyl-L-ornithine from L-glutamate: step 1/4. Its function is as follows. Catalyzes two activities which are involved in the cyclic version of arginine biosynthesis: the synthesis of N-acetylglutamate from glutamate and acetyl-CoA as the acetyl donor, and of ornithine by transacetylation between N(2)-acetylornithine and glutamate. The chain is Arginine biosynthesis bifunctional protein ArgJ from Staphylococcus epidermidis (strain ATCC 35984 / DSM 28319 / BCRC 17069 / CCUG 31568 / BM 3577 / RP62A).